Consider the following 167-residue polypeptide: Peptide deformylase (167 aa).

Residues Cys91 and His133 each coordinate Fe cation. The active site involves Glu134. A Fe cation-binding site is contributed by His137.

This sequence belongs to the polypeptide deformylase family. The cofactor is Fe(2+).

The enzyme catalyses N-terminal N-formyl-L-methionyl-[peptide] + H2O = N-terminal L-methionyl-[peptide] + formate. Functionally, removes the formyl group from the N-terminal Met of newly synthesized proteins. Requires at least a dipeptide for an efficient rate of reaction. N-terminal L-methionine is a prerequisite for activity but the enzyme has broad specificity at other positions. This chain is Peptide deformylase, found in Pseudoalteromonas translucida (strain TAC 125).